Reading from the N-terminus, the 807-residue chain is Putative transmembrane protein ORF807 (807 aa).

A run of 5 helical transmembrane segments spans residues 210–230 (VLML…SDIL), 234–254 (GLST…IVYF), 270–290 (VTIQ…FVIL), 459–479 (ILIG…LVLT), and 657–677 (VALL…MPLV).

It localises to the host membrane. The protein is Putative transmembrane protein ORF807 of Acidianus filamentous virus 1 (isolate United States/Yellowstone) (AFV-1).